The following is a 548-amino-acid chain: Cleavage and polyadenylation specificity factor subunit 6 (548 aa).

The RRM domain occupies Ile81–Lys161. Residues Met169–Gln180 show a composition bias toward polar residues. 2 disordered regions span residues Met169–Val401 and Leu473–Arg548. Composition is skewed to pro residues over residues Pro221–Met279, Pro294–Gly362, and Gly373–Pro384. Basic and acidic residues-rich tracts occupy residues Pro385–Val400 and Arg490–Arg500. A compositionally biased stretch (basic residues) spans Glu501–Arg511. Over residues Asp512–Arg548 the composition is skewed to basic and acidic residues.

The protein belongs to the RRM CPSF6/7 family. Component of the cleavage factor Im (CFIm) complex.

It is found in the nucleus. The protein resides in the nucleoplasm. Its subcellular location is the nucleus speckle. It localises to the cytoplasm. Component of the cleavage factor Im (CFIm) complex that functions as an activator of the pre-mRNA 3'-end cleavage and polyadenylation processing required for the maturation of pre-mRNA into functional mRNAs. CFIm contributes to the recruitment of multiprotein complexes on specific sequences on the pre-mRNA 3'-end, so called cleavage and polyadenylation signals (pA signals). Most pre-mRNAs contain multiple pA signals, resulting in alternative cleavage and polyadenylation (APA) producing mRNAs with variable 3'-end formation. The CFIm complex acts as a key regulator of cleavage and polyadenylation site choice during APA through its binding to 5'-UGUA-3' elements localized in the 3'-untranslated region (UTR) for a huge number of pre-mRNAs. Plays a role in mRNA export. The chain is Cleavage and polyadenylation specificity factor subunit 6 from Xenopus laevis (African clawed frog).